A 322-amino-acid polypeptide reads, in one-letter code: Lipoyl synthase (322 aa).

[4Fe-4S] cluster is bound by residues Cys-69, Cys-74, Cys-80, Cys-95, Cys-99, Cys-102, and Ser-309. Residues 81-298 (FNHGTATFMI…GVKAKALGFD (218 aa)) enclose the Radical SAM core domain.

This sequence belongs to the radical SAM superfamily. Lipoyl synthase family. [4Fe-4S] cluster is required as a cofactor.

The protein resides in the cytoplasm. The enzyme catalyses [[Fe-S] cluster scaffold protein carrying a second [4Fe-4S](2+) cluster] + N(6)-octanoyl-L-lysyl-[protein] + 2 oxidized [2Fe-2S]-[ferredoxin] + 2 S-adenosyl-L-methionine + 4 H(+) = [[Fe-S] cluster scaffold protein] + N(6)-[(R)-dihydrolipoyl]-L-lysyl-[protein] + 4 Fe(3+) + 2 hydrogen sulfide + 2 5'-deoxyadenosine + 2 L-methionine + 2 reduced [2Fe-2S]-[ferredoxin]. Its pathway is protein modification; protein lipoylation via endogenous pathway; protein N(6)-(lipoyl)lysine from octanoyl-[acyl-carrier-protein]: step 2/2. Its function is as follows. Catalyzes the radical-mediated insertion of two sulfur atoms into the C-6 and C-8 positions of the octanoyl moiety bound to the lipoyl domains of lipoate-dependent enzymes, thereby converting the octanoylated domains into lipoylated derivatives. This is Lipoyl synthase from Psychromonas ingrahamii (strain DSM 17664 / CCUG 51855 / 37).